The following is a 252-amino-acid chain: Imidazole glycerol phosphate synthase subunit HisF (252 aa).

Catalysis depends on residues D11 and D130.

The protein belongs to the HisA/HisF family. In terms of assembly, heterodimer of HisH and HisF.

The protein resides in the cytoplasm. It carries out the reaction 5-[(5-phospho-1-deoxy-D-ribulos-1-ylimino)methylamino]-1-(5-phospho-beta-D-ribosyl)imidazole-4-carboxamide + L-glutamine = D-erythro-1-(imidazol-4-yl)glycerol 3-phosphate + 5-amino-1-(5-phospho-beta-D-ribosyl)imidazole-4-carboxamide + L-glutamate + H(+). The protein operates within amino-acid biosynthesis; L-histidine biosynthesis; L-histidine from 5-phospho-alpha-D-ribose 1-diphosphate: step 5/9. Functionally, IGPS catalyzes the conversion of PRFAR and glutamine to IGP, AICAR and glutamate. The HisF subunit catalyzes the cyclization activity that produces IGP and AICAR from PRFAR using the ammonia provided by the HisH subunit. The polypeptide is Imidazole glycerol phosphate synthase subunit HisF (Bacillus cereus (strain Q1)).